The chain runs to 644 residues: MAKNLILWLVIAVVLMSVFQSFGPSESNGRKVDYSTFLQEVNQDQVREARINGREINVTKKDSNRYTTYIPINDPKLLDNLLTKNVKVVGEPPEEPSLLASIFISWFPMLLLIGVWIFFMRQMQGGGGKGAMSFGKSKARMLTEDQIKTTFADVAGCDEAKEEVAELVEYLREPSRFQKLGGKIPKGVLMVGPPGTGKTLLAKAIAGEAKVPFFTISGSDFVEMFVGVGASRVRDMFEQAKKAAPCIIFIDEIDAVGRQRGAGLGGGHDEREQTLNQMLVEMDGFEGNEGIIVIAATNRPDVLDPALLRPGRFDRQVVVGLPDVRGREQILKVHMRRVPLATDIDAAIIARGTPGFSGADLANLVNEAALFAARGNKRVVSMVEFEKAKDKIMMGAERRSMVMTEAQKESTAYHEAGHAIIGRLVPEHDPVHKVTIIPRGRALGVTFFLPEGDAISASRQKLESQISTLYGGRLAEEIIYGVEHVSTGASNDIKVATNLARNMVTQWGFSEKLGPLLYAEEEGEVFLGRSVAKAKHMSDETARIIDQEVKALIERNYNRARQILTDNMDILHAMKDALMKYETIDAPQIDDLMARREVRPPAGWEDPNGTNNSDSNGTPQAPRPVDEPRTPNPGNTMSEQLGDK.

Residues 1 to 4 lie on the Cytoplasmic side of the membrane; sequence MAKN. A helical membrane pass occupies residues 5-25; the sequence is LILWLVIAVVLMSVFQSFGPS. Residues 26–98 are Periplasmic-facing; it reads ESNGRKVDYS…VGEPPEEPSL (73 aa). Residues 99 to 119 traverse the membrane as a helical segment; it reads LASIFISWFPMLLLIGVWIFF. Topologically, residues 120–644 are cytoplasmic; sequence MRQMQGGGGK…NTMSEQLGDK (525 aa). Residue 192 to 199 coordinates ATP; the sequence is GPPGTGKT. Zn(2+) is bound at residue histidine 414. Glutamate 415 is an active-site residue. Positions 418 and 492 each coordinate Zn(2+). The disordered stretch occupies residues 599-644; sequence RPPAGWEDPNGTNNSDSNGTPQAPRPVDEPRTPNPGNTMSEQLGDK. Composition is skewed to polar residues over residues 608–619 and 632–644; these read NGTNNSDSNGTP and NPGNTMSEQLGDK.

The protein in the central section; belongs to the AAA ATPase family. In the C-terminal section; belongs to the peptidase M41 family. As to quaternary structure, homohexamer. Zn(2+) serves as cofactor.

The protein resides in the cell inner membrane. Acts as a processive, ATP-dependent zinc metallopeptidase for both cytoplasmic and membrane proteins. Plays a role in the quality control of integral membrane proteins. The sequence is that of ATP-dependent zinc metalloprotease FtsH from Salmonella typhi.